Consider the following 115-residue polypeptide: Large ribosomal subunit protein bL20c (115 aa).

This sequence belongs to the bacterial ribosomal protein bL20 family.

It localises to the plastid. Its subcellular location is the chloroplast. Its function is as follows. Binds directly to 23S ribosomal RNA and is necessary for the in vitro assembly process of the 50S ribosomal subunit. It is not involved in the protein synthesizing functions of that subunit. The chain is Large ribosomal subunit protein bL20c from Emiliania huxleyi (Coccolithophore).